Reading from the N-terminus, the 470-residue chain is Cysteine--tRNA ligase (470 aa).

Cysteine 27 serves as a coordination point for Zn(2+). A 'HIGH' region motif is present at residues 29-39 (PTVYNFFHIGN). The Zn(2+) site is built by cysteine 211, histidine 236, and glutamate 240. Positions 268–272 (KMSKS) match the 'KMSKS' region motif. Residue lysine 271 coordinates ATP.

This sequence belongs to the class-I aminoacyl-tRNA synthetase family. In terms of assembly, monomer. Zn(2+) serves as cofactor.

It is found in the cytoplasm. It catalyses the reaction tRNA(Cys) + L-cysteine + ATP = L-cysteinyl-tRNA(Cys) + AMP + diphosphate. The chain is Cysteine--tRNA ligase from Clostridium botulinum (strain Alaska E43 / Type E3).